Consider the following 313-residue polypeptide: 4-hydroxy-3-methylbut-2-enyl diphosphate reductase (313 aa).

A [4Fe-4S] cluster-binding site is contributed by Cys-12. Residues His-41 and His-74 each coordinate (2E)-4-hydroxy-3-methylbut-2-enyl diphosphate. His-41 and His-74 together coordinate dimethylallyl diphosphate. Isopentenyl diphosphate-binding residues include His-41 and His-74. Position 96 (Cys-96) interacts with [4Fe-4S] cluster. His-124 is a binding site for (2E)-4-hydroxy-3-methylbut-2-enyl diphosphate. Residue His-124 participates in dimethylallyl diphosphate binding. Residue His-124 coordinates isopentenyl diphosphate. Glu-126 acts as the Proton donor in catalysis. Thr-167 serves as a coordination point for (2E)-4-hydroxy-3-methylbut-2-enyl diphosphate. A [4Fe-4S] cluster-binding site is contributed by Cys-197. (2E)-4-hydroxy-3-methylbut-2-enyl diphosphate-binding residues include Ser-225, Ser-226, Asn-227, and Ser-269. The dimethylallyl diphosphate site is built by Ser-225, Ser-226, Asn-227, and Ser-269. Residues Ser-225, Ser-226, Asn-227, and Ser-269 each coordinate isopentenyl diphosphate.

The protein belongs to the IspH family. Homodimer. Requires [4Fe-4S] cluster as cofactor.

The catalysed reaction is isopentenyl diphosphate + 2 oxidized [2Fe-2S]-[ferredoxin] + H2O = (2E)-4-hydroxy-3-methylbut-2-enyl diphosphate + 2 reduced [2Fe-2S]-[ferredoxin] + 2 H(+). It catalyses the reaction dimethylallyl diphosphate + 2 oxidized [2Fe-2S]-[ferredoxin] + H2O = (2E)-4-hydroxy-3-methylbut-2-enyl diphosphate + 2 reduced [2Fe-2S]-[ferredoxin] + 2 H(+). The protein operates within isoprenoid biosynthesis; dimethylallyl diphosphate biosynthesis; dimethylallyl diphosphate from (2E)-4-hydroxy-3-methylbutenyl diphosphate: step 1/1. It functions in the pathway isoprenoid biosynthesis; isopentenyl diphosphate biosynthesis via DXP pathway; isopentenyl diphosphate from 1-deoxy-D-xylulose 5-phosphate: step 6/6. Functionally, catalyzes the conversion of 1-hydroxy-2-methyl-2-(E)-butenyl 4-diphosphate (HMBPP) into a mixture of isopentenyl diphosphate (IPP) and dimethylallyl diphosphate (DMAPP). Acts in the terminal step of the DOXP/MEP pathway for isoprenoid precursor biosynthesis. This chain is 4-hydroxy-3-methylbut-2-enyl diphosphate reductase, found in Buchnera aphidicola subsp. Schizaphis graminum (strain Sg).